Consider the following 164-residue polypeptide: UPF0304 protein YPDSF_1971 (164 aa).

This sequence belongs to the UPF0304 family.

The chain is UPF0304 protein YPDSF_1971 from Yersinia pestis (strain Pestoides F).